We begin with the raw amino-acid sequence, 527 residues long: V(D)J recombination-activating protein 2 (527 aa).

The segment at 357–380 is disordered; that stretch reads EEQTTFTNSQTSTEDPGDSTPFED. The segment covering 358–370 has biased composition (polar residues); it reads EQTTFTNSQTSTE. A compositionally biased stretch (acidic residues) spans 371–380; it reads DPGDSTPFED. A PHD-type; atypical zinc finger spans residues 416–484; it reads WITCCPTCDV…KYYCNEHVEI (69 aa). Zn(2+)-binding residues include cysteine 419, cysteine 423, cysteine 446, histidine 452, histidine 455, cysteine 458, cysteine 478, and histidine 481.

The protein belongs to the RAG2 family. In terms of assembly, component of the RAG complex composed of core components RAG1 and RAG2, and associated component HMGB1 or HMGB2. In terms of tissue distribution, cells of the B- and T-lymphocyte lineages.

It localises to the nucleus. Core component of the RAG complex, a multiprotein complex that mediates the DNA cleavage phase during V(D)J recombination. V(D)J recombination assembles a diverse repertoire of immunoglobulin and T-cell receptor genes in developing B and T-lymphocytes through rearrangement of different V (variable), in some cases D (diversity), and J (joining) gene segments. DNA cleavage by the RAG complex occurs in 2 steps: a first nick is introduced in the top strand immediately upstream of the heptamer, generating a 3'-hydroxyl group that can attack the phosphodiester bond on the opposite strand in a direct transesterification reaction, thereby creating 4 DNA ends: 2 hairpin coding ends and 2 blunt, 5'-phosphorylated ends. The chromatin structure plays an essential role in the V(D)J recombination reactions and the presence of histone H3 trimethylated at 'Lys-4' (H3K4me3) stimulates both the nicking and haipinning steps. The RAG complex also plays a role in pre-B cell allelic exclusion, a process leading to expression of a single immunoglobulin heavy chain allele to enforce clonality and monospecific recognition by the B-cell antigen receptor (BCR) expressed on individual B-lymphocytes. The introduction of DNA breaks by the RAG complex on one immunoglobulin allele induces ATM-dependent repositioning of the other allele to pericentromeric heterochromatin, preventing accessibility to the RAG complex and recombination of the second allele. In the RAG complex, RAG2 is not the catalytic component but is required for all known catalytic activities mediated by RAG1. It probably acts as a sensor of chromatin state that recruits the RAG complex to H3K4me3. This is V(D)J recombination-activating protein 2 (RAG2) from Homo sapiens (Human).